The chain runs to 129 residues: Large ribosomal subunit protein bL17 (129 aa).

This sequence belongs to the bacterial ribosomal protein bL17 family. As to quaternary structure, part of the 50S ribosomal subunit. Contacts protein L32.

This Pasteurella multocida (strain Pm70) protein is Large ribosomal subunit protein bL17.